The following is a 288-amino-acid chain: Putative sugar uptake protein gbs2116 (288 aa).

10 helical membrane-spanning segments follow: residues Leu-4–Gly-26, Phe-33–Lys-50, Thr-55–Gly-72, Val-85–Val-107, Phe-117–Ser-134, Phe-154–Phe-171, Ala-181–Phe-200, Val-207–Ala-229, Leu-234–Leu-256, and Val-268–Val-285.

This sequence belongs to the GRP transporter (TC 2.A.7.5) family.

It is found in the cell membrane. The chain is Putative sugar uptake protein gbs2116 from Streptococcus agalactiae serotype III (strain NEM316).